Here is a 275-residue protein sequence, read N- to C-terminus: Ribosomal RNA small subunit methyltransferase A (275 aa).

The S-adenosyl-L-methionine site is built by Asn21, Leu23, Gly48, Glu69, Asp94, and Asn115.

The protein belongs to the class I-like SAM-binding methyltransferase superfamily. rRNA adenine N(6)-methyltransferase family. RsmA subfamily.

The protein resides in the cytoplasm. It catalyses the reaction adenosine(1518)/adenosine(1519) in 16S rRNA + 4 S-adenosyl-L-methionine = N(6)-dimethyladenosine(1518)/N(6)-dimethyladenosine(1519) in 16S rRNA + 4 S-adenosyl-L-homocysteine + 4 H(+). In terms of biological role, specifically dimethylates two adjacent adenosines (A1518 and A1519) in the loop of a conserved hairpin near the 3'-end of 16S rRNA in the 30S particle. May play a critical role in biogenesis of 30S subunits. The chain is Ribosomal RNA small subunit methyltransferase A from Clostridium botulinum (strain Kyoto / Type A2).